A 140-amino-acid polypeptide reads, in one-letter code: Dehydratase ustZ (140 aa).

The EthD domain occupies 18-113; it reads PGISTEDYRN…GPDHEKFADT (96 aa).

It belongs to the tpcK family.

The catalysed reaction is naphtopyrone YWA1 = norrubrofusarin + H2O + H(+). It functions in the pathway secondary metabolite biosynthesis. Dehydratase; part of the gene cluster that mediates the biosynthesis of ustilaginoidins, dimeric gamma-naphthopyrones isolated from different fungal species. The first step in the biosynthesis of ustilaginoidins is the production of gamma-naphthopyrone precursor YWA1 by the non-reducing polyketide synthase ustP, via condensation of one acetyl-CoA starter unit with 6 malonyl-CoA units. YWA1 is then probably substrate of the ustZ to yield norrubrofusarin via a dehydration reaction. A key enzyme in the biosynthetic pathway is the laccase ustL, which catalyzes the oxidative dimerization of norrubrofusarin to ustilaginoidin A. It can produce the M- and P-atropisomers in varying amounts, depending on the reaction conditions. For the biosynthesis of 3-methylustilaginoid in derivatives such as chaetochromin A, a methylated derivative of YWA1 is required. The C-methylation is considered to be catalyzed by ustM, the phosphopantetheine attachment site of which indicates that it acts on the growing polyketide chain before release of the product. For the biosynthesis of chaetochromin A, it is assumed that saturation of the D2 double bond takes place before dimerization, and is probably catalyzed by an external reductase because no candidate gene was identified within the cluster. This Ustilaginoidea virens (Rice false smut fungus) protein is Dehydratase ustZ.